A 69-amino-acid polypeptide reads, in one-letter code: Large ribosomal subunit protein bL31 (69 aa).

Zn(2+) is bound by residues cysteine 16, cysteine 18, cysteine 37, and cysteine 40.

This sequence belongs to the bacterial ribosomal protein bL31 family. Type A subfamily. As to quaternary structure, part of the 50S ribosomal subunit. Zn(2+) serves as cofactor.

Functionally, binds the 23S rRNA. The polypeptide is Large ribosomal subunit protein bL31 (Buchnera aphidicola subsp. Cinara cedri (strain Cc)).